The primary structure comprises 221 residues: Orotate phosphoribosyltransferase (221 aa).

Residue lysine 27 coordinates 5-phospho-alpha-D-ribose 1-diphosphate. An orotate-binding site is contributed by 35–36 (FF). Residues 75–76 (YK), arginine 102, lysine 103, lysine 106, histidine 108, and 128–136 (DDVLTAGTA) each bind 5-phospho-alpha-D-ribose 1-diphosphate. Orotate is bound by residues threonine 132 and arginine 160.

The protein belongs to the purine/pyrimidine phosphoribosyltransferase family. PyrE subfamily. Homodimer. It depends on Mg(2+) as a cofactor.

It carries out the reaction orotidine 5'-phosphate + diphosphate = orotate + 5-phospho-alpha-D-ribose 1-diphosphate. Its pathway is pyrimidine metabolism; UMP biosynthesis via de novo pathway; UMP from orotate: step 1/2. Its function is as follows. Catalyzes the transfer of a ribosyl phosphate group from 5-phosphoribose 1-diphosphate to orotate, leading to the formation of orotidine monophosphate (OMP). This chain is Orotate phosphoribosyltransferase, found in Dichelobacter nodosus (strain VCS1703A).